A 209-amino-acid polypeptide reads, in one-letter code: Guanylate kinase (209 aa).

Residues 8 to 186 (GVLYIVSAPS…ALQDLVAITR (179 aa)) enclose the Guanylate kinase-like domain. 15-22 (APSGAGKT) contributes to the ATP binding site.

This sequence belongs to the guanylate kinase family.

It localises to the cytoplasm. It catalyses the reaction GMP + ATP = GDP + ADP. Essential for recycling GMP and indirectly, cGMP. The protein is Guanylate kinase of Thiobacillus denitrificans (strain ATCC 25259 / T1).